The primary structure comprises 301 residues: Phosducin-like protein (301 aa).

At Thr-2 the chain carries N-acetylthreonine. The interval 17–60 (YSTSEDEDSDHEDKDRGRGAPAISSTPAEAELAGEGISINTGPK) is disordered. Ser-20, Ser-25, Ser-226, Ser-293, and Ser-296 each carry phosphoserine. One can recognise a Phosducin domain in the interval 36-299 (APAISSTPAE…TCHSEDSDLE (264 aa)). The interval 158–301 (FKQVFEIPSG…HSEDSDLEID (144 aa)) is thioredoxin fold.

This sequence belongs to the phosducin family. As to quaternary structure, forms a complex with the beta and gamma subunits of the GTP-binding protein, transducin. Interacts with the CCT chaperonin complex.

The protein resides in the cell projection. It localises to the cilium. Functionally, functions as a co-chaperone for CCT in the assembly of heterotrimeric G protein complexes, facilitates the assembly of both Gbeta-Ggamma and RGS-Gbeta5 heterodimers. Also acts as a positive regulator of hedgehog signaling and regulates ciliary function. This chain is Phosducin-like protein (Pdcl), found in Mus musculus (Mouse).